We begin with the raw amino-acid sequence, 343 residues long: Fructose-bisphosphate aldolase (343 aa).

Serine 53 provides a ligand contact to D-glyceraldehyde 3-phosphate. The active-site Proton donor is aspartate 95. 4 residues coordinate Zn(2+): histidine 96, aspartate 131, glutamate 161, and histidine 212. Glycine 213 provides a ligand contact to dihydroxyacetone phosphate. Residue histidine 252 coordinates Zn(2+). Dihydroxyacetone phosphate contacts are provided by residues 253 to 255 (GGS) and 274 to 277 (NIDT).

The protein belongs to the class II fructose-bisphosphate aldolase family. Zn(2+) serves as cofactor.

It carries out the reaction beta-D-fructose 1,6-bisphosphate = D-glyceraldehyde 3-phosphate + dihydroxyacetone phosphate. Its pathway is carbohydrate degradation; glycolysis; D-glyceraldehyde 3-phosphate and glycerone phosphate from D-glucose: step 4/4. Catalyzes the aldol condensation of dihydroxyacetone phosphate (DHAP or glycerone-phosphate) with glyceraldehyde 3-phosphate (G3P) to form fructose 1,6-bisphosphate (FBP) in gluconeogenesis and the reverse reaction in glycolysis. The sequence is that of Fructose-bisphosphate aldolase (fba) from Streptomyces coelicolor (strain ATCC BAA-471 / A3(2) / M145).